The chain runs to 415 residues: Casein kinase I isoform delta (415 aa).

Positions 9–277 (YRLGRKIGSG…YLRQLFRNLF (269 aa)) constitute a Protein kinase domain. ATP-binding positions include 15–23 (IGSGSFGDI) and K38. D128 serves as the catalytic Proton acceptor. Residues 301–315 (AEDAERERREREERL) show a composition bias toward basic and acidic residues. Positions 301–415 (AEDAERERRE…SSGLPSTVHR (115 aa)) are disordered. The segment at 317–342 (HTRNPAVRGLPSTASGRLRGTQEVTP) is autoinhibitory. Positions 341 to 352 (TPSTPLTPTSHT) are enriched in low complexity. Positions 380 to 415 (NVSSSDLTSRQDTSRMSTSQIPSRVTSSGLPSTVHR) are enriched in polar residues.

Belongs to the protein kinase superfamily. In terms of assembly, monomer. Interacts with per1 and per2. Component of the circadian core oscillator. Autophosphorylated on serine and threonine residues. In terms of tissue distribution, detected in retina photoreceptor cells.

It is found in the cytoplasm. It localises to the nucleus. It catalyses the reaction L-seryl-[protein] + ATP = O-phospho-L-seryl-[protein] + ADP + H(+). It carries out the reaction L-threonyl-[protein] + ATP = O-phospho-L-threonyl-[protein] + ADP + H(+). The catalysed reaction is L-seryl-[tau protein] + ATP = O-phospho-L-seryl-[tau protein] + ADP + H(+). The enzyme catalyses L-threonyl-[tau protein] + ATP = O-phospho-L-threonyl-[tau protein] + ADP + H(+). Exhibits substrate-dependent heparin activation. Its function is as follows. Casein kinases are operationally defined by their preferential utilization of acidic proteins such as caseins as substrates. Can phosphorylate a large number of proteins. Central component of the circadian clock. May act as a negative regulator of circadian rhythmicity by phosphorylating per1 and per2, which may lead to their degradation. Participates in wnt signaling. Functionally, has no kinase activity. The polypeptide is Casein kinase I isoform delta (csnk1d) (Xenopus laevis (African clawed frog)).